The sequence spans 153 residues: Neuromedin-S (153 aa).

The first 26 residues, 1 to 26 (MKHPLPHYSPILFIYCFCMLQIPSSG), serve as a signal peptide directing secretion. 3 propeptides span residues 27–69 (ASPP…VYKR), 70–105 (FLFH…ASRR), and 106–108 (MKR). Asn144 is subject to Asparagine amide. Residues 147-153 (YTDNNFQ) constitute a propeptide that is removed on maturation.

It belongs to the NmU family.

The protein localises to the secreted. Functionally, implicated in the regulation of circadian rhythms through autocrine and/or paracrine actions. The chain is Neuromedin-S (Nms) from Mus musculus (Mouse).